The chain runs to 505 residues: Maturase K (505 aa).

Belongs to the intron maturase 2 family. MatK subfamily.

Its subcellular location is the plastid. The protein resides in the chloroplast. Usually encoded in the trnK tRNA gene intron. Probably assists in splicing its own and other chloroplast group II introns. This is Maturase K from Ficus carica (Common fig).